We begin with the raw amino-acid sequence, 624 residues long: Chitin elicitor receptor kinase 1 (624 aa).

Residues 1 to 18 (MEASTSLLVLVLAAAAFA) form the signal peptide. The Extracellular portion of the chain corresponds to 19–240 (AGTVTEAAGD…SPGKGASAGA (222 aa)). 3 cysteine pairs are disulfide-bonded: Cys30–Cys93, Cys34–Cys160, and Cys91–Cys158. An N-linked (GlcNAc...) asparagine glycan is attached at Asn48. Residue 115 to 121 (RGQIYTS) participates in chitin binding. A glycan (N-linked (GlcNAc...) asparagine) is linked at Asn128. 142 to 148 (PANNIPD) provides a ligand contact to chitin. Asn153 and Asn157 each carry an N-linked (GlcNAc...) asparagine glycan. The LysM domain maps to 173–218 (LTYPLRAEDTLASVAATYGLSSQLDVVRRYNPGMESATGSGIVYIP). An N-linked (GlcNAc...) asparagine glycan is attached at Asn223. The chain crosses the membrane as a helical span at residues 241-261 (IAGGVVAGVVVLAAIFLYIIF). The Cytoplasmic portion of the chain corresponds to 262–624 (YRRRKAKQAT…QGLVNLMSGR (363 aa)). The region spanning 324–599 (FSIGNKIGQG…RSVVVALMTL (276 aa)) is the Protein kinase domain. Residues 330 to 338 (IGQGGFGAV) and Lys351 each bind ATP. Residue Asp443 is the Proton acceptor of the active site.

The protein belongs to the protein kinase superfamily. Ser/Thr protein kinase family. In terms of assembly, homooligomer. Interacts with CEBIP. Interacts with LYP4 and LYP6. Interacts with RLCK176. Autophosphorylated; induced by chitin and derivatives. In terms of tissue distribution, expressed in seedlings, roots, shoots and stems, and, to a lower extent, in flowers.

The protein localises to the cell membrane. The catalysed reaction is L-seryl-[protein] + ATP = O-phospho-L-seryl-[protein] + ADP + H(+). It catalyses the reaction L-threonyl-[protein] + ATP = O-phospho-L-threonyl-[protein] + ADP + H(+). Functionally, lysin motif (LysM) receptor kinase required as a cell surface receptor for chitin elicitor (chitooligosaccharides) signaling leading to innate immunity in response to biotic stresses. Involved in the resistance to pathogenic fungi, probably by sensing microbe-associated molecular patterns (MAMP) and pathogen-associated molecular patterns (PAMP). Involved in the detection of microbial peptidoglycans (PGNs) and mediates PGN response. Plays dual roles in PGN and chitin signaling during innate immunity. Acts as an adapter for LYP4 and LYP6 and mediates signal transduction from the extracellular to intracellular spaces. Participates in the activation of defense genes during response to PGN and chitin. Phosphorylates the downstream partner RLCK185 in response to chitin elicitation. The protein is Chitin elicitor receptor kinase 1 of Oryza sativa subsp. japonica (Rice).